Consider the following 108-residue polypeptide: Movement protein TGB2 (108 aa).

The Cytoplasmic portion of the chain corresponds to 1–8 (MPLTPPPN). Residues 9–29 (YTGLYIAAALGVSLAAVVALF) traverse the membrane as a helical segment. Over 30–72 (TRSTLPIVGDSQHNLPHGGRYRDGTKAIDYFKPTKLNSVEPGN) the chain is Lumenal. Residues 73 to 93 (YWYTQPWLLVILLVALICLSG) form a helical membrane-spanning segment. Topologically, residues 94 to 108 (RHAQCCPRCNRVHSA) are cytoplasmic.

It belongs to the Tymovirales TGBp2 protein family.

Its subcellular location is the host endoplasmic reticulum membrane. Plays a role in viral cell-to-cell propagation, by facilitating genome transport to neighboring plant cells through plasmosdesmata,. In Solanum tuberosum (Potato), this protein is Movement protein TGB2.